A 480-amino-acid chain; its full sequence is Pyruvate kinase (480 aa).

Arg36 contacts substrate. K(+)-binding residues include Asn38, Ser40, and Asp70. 38–41 is an ATP binding site; it reads NFSH. ATP contacts are provided by Arg77 and Lys160. Glu225 is a Mg(2+) binding site. Substrate contacts are provided by Gly251, Asp252, and Thr284. Asp252 serves as a coordination point for Mg(2+).

This sequence belongs to the pyruvate kinase family. Homotetramer. Mg(2+) serves as cofactor. The cofactor is K(+).

The enzyme catalyses pyruvate + ATP = phosphoenolpyruvate + ADP + H(+). The protein operates within carbohydrate degradation; glycolysis; pyruvate from D-glyceraldehyde 3-phosphate: step 5/5. Allosterically activated by AMP and by several sugar phosphates. Belongs to type II PK. The protein is Pyruvate kinase (pykA) of Buchnera aphidicola subsp. Acyrthosiphon pisum (strain APS) (Acyrthosiphon pisum symbiotic bacterium).